The chain runs to 1396 residues: uncharacterized protein (1396 aa).

88–95 contributes to the ATP binding site; that stretch reads AYKKWGRS. Disordered regions lie at residues 146 to 165 and 198 to 388; these read EKIH…LSPT and KPCS…VKDL. Low complexity predominate over residues 198–221; it reads KPCSYSSSSSSSTVPPASTDTSSP. The segment covering 242 to 268 has biased composition (basic and acidic residues); it reads MHEKAQSRSRHEKESKLSSSTIEEKPA. Over residues 286–300 the composition is skewed to low complexity; it reads SWSSGSSEAGSSSSG. Over residues 312–327 the composition is skewed to basic residues; it reads VKVRHKAREIRNRKGR. A phosphoserine mark is found at Ser-817 and Ser-1083. A disordered region spans residues 1113 to 1137; that stretch reads PISASELSPGGGSESEFESEKDEAS. 2 positions are modified to phosphoserine: Ser-1197 and Ser-1339. A disordered region spans residues 1347–1396; the sequence is TGERGSETKPNGLHRKMCSSASSDTGDTGSEAGGEWVGPSREELFSRTHL. A compositionally biased stretch (low complexity) spans 1365–1376; that stretch reads SSASSDTGDTGS. A compositionally biased stretch (basic and acidic residues) spans 1386–1396; that stretch reads SREELFSRTHL.

This is an uncharacterized protein from Mus musculus (Mouse).